A 227-amino-acid chain; its full sequence is Orotidine 5'-phosphate decarboxylase (227 aa).

Substrate-binding positions include aspartate 8, lysine 30, 58–67 (DLKLYDIPNT), threonine 117, arginine 177, glutamine 186, glycine 206, and arginine 207. The Proton donor role is filled by lysine 60.

This sequence belongs to the OMP decarboxylase family. Type 1 subfamily. In terms of assembly, homodimer.

The enzyme catalyses orotidine 5'-phosphate + H(+) = UMP + CO2. The protein operates within pyrimidine metabolism; UMP biosynthesis via de novo pathway; UMP from orotate: step 2/2. In terms of biological role, catalyzes the decarboxylation of orotidine 5'-monophosphate (OMP) to uridine 5'-monophosphate (UMP). The sequence is that of Orotidine 5'-phosphate decarboxylase from Campylobacter lari (strain RM2100 / D67 / ATCC BAA-1060).